We begin with the raw amino-acid sequence, 164 residues long: Transcription factor E (164 aa).

The HTH TFE/IIEalpha-type domain maps to 5–87 (NDKVIRGYLL…LWRLDFSDIE (83 aa)).

It belongs to the TFE family. In terms of assembly, monomer. Interaction with RNA polymerase subunits RpoF and RpoE is necessary for Tfe stimulatory transcription activity. Able to interact with Tbp and RNA polymerase in the absence of DNA promoter. Interacts both with the preinitiation and elongation complexes.

Its function is as follows. Transcription factor that plays a role in the activation of archaeal genes transcribed by RNA polymerase. Facilitates transcription initiation by enhancing TATA-box recognition by TATA-box-binding protein (Tbp), and transcription factor B (Tfb) and RNA polymerase recruitment. Not absolutely required for transcription in vitro, but particularly important in cases where Tbp or Tfb function is not optimal. It dynamically alters the nucleic acid-binding properties of RNA polymerases by stabilizing the initiation complex and destabilizing elongation complexes. Seems to translocate with the RNA polymerase following initiation and acts by binding to the non template strand of the transcription bubble in elongation complexes. This Methanosarcina barkeri (strain Fusaro / DSM 804) protein is Transcription factor E.